We begin with the raw amino-acid sequence, 542 residues long: MEIPVREERRSSSSSAGPLQQTISLAADDAIDSGPSSPLVVKVSVFETEHETTKLIHAPSTLLGETTGDADFPPIQSFRDAKLVCVVETSKLWEIAAPIAFNILCNYGVNSFTSIFVGHIGDLELSAVAIALSVVSNFSFGFLLGMASALETLCGQAFGAGQMDMLGVYMQRSWLILLGTSVCLLPLYIYATPLLILLGQEPEIAEISGKFTTQIIPQMFALAINFPTQKFLQSQSKVGIMAWIGFFALTLHIFILYLFINVFKWGLNGAAAAFDVSAWGIAIAQVVYVVGWCKDGWKGLSWLAFQDVWPFLKLSFASAVMLCLEIWYFMTIIVLTGHLEDPVIAVGSLSICMNINGWEGMLFIGINAAISVRVSNELGSGHPRAAKYSVIVTVIESLVIGVVCAIVILITRDDFAVIFTESEEMRKAVADLAYLLGITMILNSLQPVISGVAVGGGWQAPVAYINLFCYYAFGLPLGFLLGYKTSLGVQGIWIGMICGTSLQTLILLYMIYITNWNKEVEQASERMKQWGAGYEKLEKIAT.

12 helical membrane passes run 97–117 (APIA…SIFV), 127–147 (AVAI…LGMA), 176–196 (ILLG…PLLI), 204–224 (IAEI…ALAI), 240–260 (IMAW…YLFI), 272–292 (AAFD…VVGW), 316–336 (FASA…IVLT), 344–364 (IAVG…MLFI), 390–410 (VIVT…VILI), 435–455 (LLGI…VAVG), 462–482 (VAYI…FLLG), and 491–511 (GIWI…LYMI).

It belongs to the multi antimicrobial extrusion (MATE) (TC 2.A.66.1) family.

The protein localises to the membrane. The polypeptide is Protein DETOXIFICATION 34 (Arabidopsis thaliana (Mouse-ear cress)).